The sequence spans 193 residues: Peptidyl-tRNA hydrolase (193 aa).

Tyr-15 is a tRNA binding site. The active-site Proton acceptor is His-20. The tRNA site is built by Phe-65, Asn-67, and Asn-113.

Belongs to the PTH family. As to quaternary structure, monomer.

The protein resides in the cytoplasm. It carries out the reaction an N-acyl-L-alpha-aminoacyl-tRNA + H2O = an N-acyl-L-amino acid + a tRNA + H(+). Functionally, hydrolyzes ribosome-free peptidyl-tRNAs (with 1 or more amino acids incorporated), which drop off the ribosome during protein synthesis, or as a result of ribosome stalling. In terms of biological role, catalyzes the release of premature peptidyl moieties from peptidyl-tRNA molecules trapped in stalled 50S ribosomal subunits, and thus maintains levels of free tRNAs and 50S ribosomes. This is Peptidyl-tRNA hydrolase from Ehrlichia ruminantium (strain Gardel).